The following is a 702-amino-acid chain: Amino-acid racemase (702 aa).

Topologically, residues 1–12 are cytoplasmic; that stretch reads MKHRANGIDLFR. The chain crosses the membrane as a helical span at residues 13 to 33; it reads IFAATMVVAIHTFPFQSIAPF. Topologically, residues 34 to 39 are extracellular; that stretch reads LDEVIT. A helical membrane pass occupies residues 40–60; the sequence is LTVFRVAVPFFFMITGYFLLG. Residues 61-77 are Cytoplasmic-facing; that stretch reads RLSLNFSYNNNQRVKKY. The chain crosses the membrane as a helical span at residues 78 to 98; it reads LYKIGMIYLYSILLYFPLSLL. At 99–120 the chain is on the extracellular side; that stretch reads NGTISLKMNILLLLKVFIFDGT. Residues 121–141 form a helical membrane-spanning segment; that stretch reads FYHLWYFPASIIGTILVTLLL. A topological domain (cytoplasmic) is located at residue arginine 142. Residues 143–163 form a helical membrane-spanning segment; sequence SIGFKLTVAFSTCLYLVGLGG. The Extracellular segment spans residues 164–191; that stretch reads DSWYGITNQVPLLNKLYTFIFSWSDYTR. A helical transmembrane segment spans residues 192 to 212; that stretch reads SGVFFTPVFLCLGIFAYRVSK. Over 213–218 the chain is Cytoplasmic; that stretch reads KLTASK. Residues 219–239 traverse the membrane as a helical segment; the sequence is ILNLLFYVFIIGMTFESIFLH. Topologically, residues 240-248 are extracellular; that stretch reads RFTNVKHDS. The helical transmembrane segment at 249 to 269 threads the bilayer; sequence MYLLLPSCALILFLMLLNWQP. Residues 270–276 are Cytoplasmic-facing; sequence KLKVKES. Residues 277-297 form a helical membrane-spanning segment; that stretch reads ADLTLLVYILHPLVIVIVHSI. Over 298-307 the chain is Extracellular; sequence SKYIPILKNS. Residues 308 to 328 form a helical membrane-spanning segment; it reads LLNFLLVVVCSFILAQLLLNL. Over 329-702 the chain is Cytoplasmic; it reads KRKLRVSKQK…LGSRLGTELN (374 aa). Positions 337–702 are racemase; sequence QKIPFERASK…LGSRLGTELN (366 aa). The Proton acceptor role is filled by lysine 375. Lysine 375 carries the post-translational modification N6-(pyridoxal phosphate)lysine. Arginine 469 is a substrate binding site. The active-site Proton acceptor is tyrosine 601. Methionine 650 is a substrate binding site.

It in the N-terminal section; belongs to the acyltransferase 3 family. This sequence in the C-terminal section; belongs to the alanine racemase family. The cofactor is pyridoxal 5'-phosphate.

It localises to the cell membrane. In Enterococcus faecalis (Streptococcus faecalis), this protein is Amino-acid racemase (vanTE).